The chain runs to 63 residues: Large ribosomal subunit protein uL30 (63 aa).

The protein belongs to the universal ribosomal protein uL30 family. As to quaternary structure, part of the 50S ribosomal subunit.

The sequence is that of Large ribosomal subunit protein uL30 from Natranaerobius thermophilus (strain ATCC BAA-1301 / DSM 18059 / JW/NM-WN-LF).